The chain runs to 399 residues: Dual-specificity RNA methyltransferase RlmN (399 aa).

The active-site Proton acceptor is glutamate 122. The region spanning 128 to 371 (ETDRGTLCVS…VRTPRGRDIL (244 aa)) is the Radical SAM core domain. Cysteine 135 and cysteine 374 are oxidised to a cystine. [4Fe-4S] cluster-binding residues include cysteine 142, cysteine 146, and cysteine 149. S-adenosyl-L-methionine contacts are provided by residues 200-201 (GE), serine 232, 254-256 (SLH), and asparagine 331. The active-site S-methylcysteine intermediate is cysteine 374.

The protein belongs to the radical SAM superfamily. RlmN family. It depends on [4Fe-4S] cluster as a cofactor.

Its subcellular location is the cytoplasm. The catalysed reaction is adenosine(2503) in 23S rRNA + 2 reduced [2Fe-2S]-[ferredoxin] + 2 S-adenosyl-L-methionine = 2-methyladenosine(2503) in 23S rRNA + 5'-deoxyadenosine + L-methionine + 2 oxidized [2Fe-2S]-[ferredoxin] + S-adenosyl-L-homocysteine. The enzyme catalyses adenosine(37) in tRNA + 2 reduced [2Fe-2S]-[ferredoxin] + 2 S-adenosyl-L-methionine = 2-methyladenosine(37) in tRNA + 5'-deoxyadenosine + L-methionine + 2 oxidized [2Fe-2S]-[ferredoxin] + S-adenosyl-L-homocysteine. Specifically methylates position 2 of adenine 2503 in 23S rRNA and position 2 of adenine 37 in tRNAs. m2A2503 modification seems to play a crucial role in the proofreading step occurring at the peptidyl transferase center and thus would serve to optimize ribosomal fidelity. The chain is Dual-specificity RNA methyltransferase RlmN from Rhodopseudomonas palustris (strain ATCC BAA-98 / CGA009).